Consider the following 120-residue polypeptide: uncharacterized protein (120 aa).

The next 2 membrane-spanning stretches (helical) occupy residues P26–M46 and L57–V77.

The protein resides in the membrane. This is an uncharacterized protein from Saccharomyces cerevisiae (strain ATCC 204508 / S288c) (Baker's yeast).